Here is a 433-residue protein sequence, read N- to C-terminus: Phosphomethylpyrimidine synthase (433 aa).

Substrate is bound by residues N68, M97, Y126, H162, 184–186 (SRG), 225–228 (DALR), and E264. Residue H268 coordinates Zn(2+). Position 291 (Y291) interacts with substrate. H332 provides a ligand contact to Zn(2+). [4Fe-4S] cluster is bound by residues C408, C411, and C415.

It belongs to the ThiC family. The cofactor is [4Fe-4S] cluster.

It catalyses the reaction 5-amino-1-(5-phospho-beta-D-ribosyl)imidazole + S-adenosyl-L-methionine = 4-amino-2-methyl-5-(phosphooxymethyl)pyrimidine + CO + 5'-deoxyadenosine + formate + L-methionine + 3 H(+). The protein operates within cofactor biosynthesis; thiamine diphosphate biosynthesis. Catalyzes the synthesis of the hydroxymethylpyrimidine phosphate (HMP-P) moiety of thiamine from aminoimidazole ribotide (AIR) in a radical S-adenosyl-L-methionine (SAM)-dependent reaction. The sequence is that of Phosphomethylpyrimidine synthase from Fusobacterium nucleatum subsp. nucleatum (strain ATCC 25586 / DSM 15643 / BCRC 10681 / CIP 101130 / JCM 8532 / KCTC 2640 / LMG 13131 / VPI 4355).